We begin with the raw amino-acid sequence, 238 residues long: Transcriptional activator HAC1 (238 aa).

The disordered stretch occupies residues 1-39 (MEMTDFELTSNSQSNLAIPTNFKSTLPPRKRAKTKEEKE). A compositionally biased stretch (polar residues) spans 7-24 (ELTSNSQSNLAIPTNFKS). Positions 39 to 102 (EQRRIERILR…LTCSHDAFVA (64 aa)) constitute a bZIP domain. Positions 41-61 (RRIERILRNRRAAHQSREKKR) are basic motif. A leucine-zipper region spans residues 67–74 (LERKCSLL). Residues 115 to 152 (GASLDTRASSHSSSDTFTPSPLNCTMEPATLSPKSMRD) form a disordered region. Residues 117 to 134 (SLDTRASSHSSSDTFTPS) show a composition bias toward low complexity.

It belongs to the bZIP family. As to quaternary structure, homodimer.

It localises to the nucleus. In terms of biological role, transcriptional activator involved in the unfolded protein response (UPR) pathway. Recognizes and binds to the UPR element (UPRE) in the promoter of UPR-regulated genes such as KAR2, PDI1, EUG1 and FKB2. Increases the synthesis of endoplasmic reticulum-resident proteins required for protein folding as well as components of the secretory pathway. This chain is Transcriptional activator HAC1 (HAC1), found in Saccharomyces cerevisiae (strain ATCC 204508 / S288c) (Baker's yeast).